Reading from the N-terminus, the 102-residue chain is MRKYEALLLLSPELATDNRQEIVENLKGVLERQGTTMLSVDEWGMKDLAYPVQKKTRGHYTRFEFAAPATAIAEFERIVRITDGVMKFITVKLADKYVPEGA.

It belongs to the bacterial ribosomal protein bS6 family.

Its function is as follows. Binds together with bS18 to 16S ribosomal RNA. This is Small ribosomal subunit protein bS6 from Solidesulfovibrio magneticus (strain ATCC 700980 / DSM 13731 / RS-1) (Desulfovibrio magneticus).